The chain runs to 325 residues: Serpentine receptor class gamma-16 (325 aa).

7 helical membrane passes run 25–45 (FCLYLIPGAILHVLILRILLI), 65–85 (VVSLVLIFWGIFFNRLFMFIP), 87–107 (LCPLVSPLFFEPSLFLKMYYW), 144–164 (LAVTTVFVVLALPFFGSWNLL), 187–207 (WASLSMFQSIFLLIALCFTII), 232–252 (FVSLFYSIAFLVVAVSQLIFV), and 264–284 (LLFQFFAFDFLTVGSAVIIML).

This sequence belongs to the nematode receptor-like protein srg family.

Its subcellular location is the membrane. In Caenorhabditis elegans, this protein is Serpentine receptor class gamma-16 (srg-16).